A 77-amino-acid polypeptide reads, in one-letter code: MKLTCMVIVAVLFLTANTFVTADDSGNGLENLFSKAHHEIKNPEASNLNKRCIPFLHPCTFFFPDCCNSICAQFICL.

Positions 1–22 (MKLTCMVIVAVLFLTANTFVTA) are cleaved as a signal peptide. The propeptide occupies 23 to 51 (DDSGNGLENLFSKAHHEIKNPEASNLNKR). 3 cysteine pairs are disulfide-bonded: cysteine 52–cysteine 67, cysteine 59–cysteine 71, and cysteine 66–cysteine 76.

In terms of tissue distribution, expressed by the venom duct.

The protein resides in the secreted. In Conus victoriae (Queen Victoria cone), this protein is Conotoxin Vc6c.